Consider the following 524-residue polypeptide: Tyrosine-protein kinase HCK (524 aa).

Disordered regions lie at residues 1 to 20 (MGGRSSCEDPGCPRGEGRVP) and 35 to 71 (KASKIEPNANQKGPVYVPDPTSPKKLGPNSINSLPPG). Gly-2 carries N-myristoyl glycine lipidation. A lipid anchor (S-palmitoyl cysteine) is attached at Gly-3. Tyr-50 carries the phosphotyrosine; by autocatalysis modification. In terms of domain architecture, SH3 spans 76 to 136 (SEDTIVVALY…PSNYVARVNS (61 aa)). The 98-residue stretch at 142-239 (WFFKGISRKD…GLCQKLSVPC (98 aa)) folds into the SH2 domain. Thr-200 is subject to Phosphothreonine. Tyr-207 bears the Phosphotyrosine mark. Residues 260-513 (LQMEKKLGAG…YIQSVLDDFY (254 aa)) enclose the Protein kinase domain. ATP contacts are provided by residues 266-274 (LGAGQFGEV) and Lys-288. Asp-379 serves as the catalytic Proton acceptor. Tyr-409 is modified (phosphotyrosine; by autocatalysis). Ser-460 carries the phosphoserine modification. Residue Tyr-520 is modified to Phosphotyrosine.

The protein belongs to the protein kinase superfamily. Tyr protein kinase family. SRC subfamily. Interacts with ADAM15. Interacts with FASLG. Interacts with ARRB1 and ARRB2. Interacts with FCGR1A; the interaction may be indirect. Interacts with IL6ST. Interacts (via SH3 domain) with ELMO1. Interacts (via SH3 domain) with TP73. Interacts with YAP1. Interacts with ABL1 and ITGB1, and thereby recruits ABL1 to activated ITGB1. Interacts (via SH2 domain) with FLT3 (tyrosine phosphorylated). Interacts with CBL. Interacts with VAV1, WAS and RAPGEF1. Interacts (via SH3 domain) with WDCP. In terms of processing, phosphorylated on several tyrosine residues. Autophosphorylated. Becomes rapidly phosphorylated upon activation of the immunoglobulin receptors FCGR1A and FCGR2A. Phosphorylation at Tyr-409 increases kinase activity. Phosphorylation at Tyr-520 inhibits kinase activity. Kinase activity is not required for phosphorylation at Tyr-520, suggesting that this site may be a target of other kinases. Post-translationally, ubiquitinated by CBL, leading to its degradation via the proteasome. Isoform 2 palmitoylation at position 2 requires prior myristoylation. Palmitoylation at position 3 is required for caveolar localization of isoform 2. As to expression, expressed strongly in spleen and at very low levels in thymus.

Its subcellular location is the cytoplasmic vesicle. It is found in the secretory vesicle. The protein localises to the cytoplasm. It localises to the cytosol. The protein resides in the membrane. Its subcellular location is the caveola. It is found in the lysosome. The protein localises to the cell projection. It localises to the podosome membrane. The protein resides in the cell membrane. Its subcellular location is the cell junction. It is found in the focal adhesion. The protein localises to the cytoskeleton. It localises to the golgi apparatus. The protein resides in the nucleus. It carries out the reaction L-tyrosyl-[protein] + ATP = O-phospho-L-tyrosyl-[protein] + ADP + H(+). Its activity is regulated as follows. Subject to autoinhibition, mediated by intramolecular interactions involving the SH2 and SH3 domains. Kinase activity is also regulated by phosphorylation at regulatory tyrosine residues. Phosphorylation at Tyr-409 is required for optimal activity. Phosphorylation at Tyr-520 inhibits kinase activity. Non-receptor tyrosine-protein kinase found in hematopoietic cells that transmits signals from cell surface receptors and plays an important role in the regulation of innate immune responses, including neutrophil, monocyte, macrophage and mast cell functions, phagocytosis, cell survival and proliferation, cell adhesion and migration. Acts downstream of receptors that bind the Fc region of immunoglobulins, such as FCGR1A and FCGR2A, but also CSF3R, PLAUR, the receptors for IFNG, IL2, IL6 and IL8, and integrins, such as ITGB1 and ITGB2. During the phagocytic process, mediates mobilization of secretory lysosomes, degranulation, and activation of NADPH oxidase to bring about the respiratory burst. Plays a role in the release of inflammatory molecules. Promotes reorganization of the actin cytoskeleton and actin polymerization, formation of podosomes and cell protrusions. Inhibits TP73-mediated transcription activation and TP73-mediated apoptosis. Phosphorylates CBL in response to activation of immunoglobulin gamma Fc region receptors. Phosphorylates ADAM15, BCR, ELMO1, FCGR2A, GAB1, GAB2, RAPGEF1, STAT5B, TP73, VAV1 and WAS. In Rattus norvegicus (Rat), this protein is Tyrosine-protein kinase HCK (Hck).